The primary structure comprises 178 residues: uncharacterized protein (178 aa).

Disordered stretches follow at residues 89 to 115 (NEEQ…RLSI) and 136 to 178 (DMPT…EIKA). The span at 98–109 (ASHGSTSSATST) shows a compositional bias: low complexity. A compositionally biased stretch (acidic residues) spans 167-178 (DSDEEEEEEIKA).

It localises to the cytoplasm. It is found in the nucleus. This is an uncharacterized protein from Schizosaccharomyces pombe (strain 972 / ATCC 24843) (Fission yeast).